Reading from the N-terminus, the 908-residue chain is Translation initiation factor IF-2 (908 aa).

Disordered stretches follow at residues 123-154 and 212-278; these read EEPP…EELK and KKEP…VSEK. Residues 407 to 577 enclose the tr-type G domain; sequence ERAPIVTIMG…LFEAELLELK (171 aa). Positions 416-423 are G1; the sequence is GHVDHGKT. Residue 416-423 coordinates GTP; it reads GHVDHGKT. The segment at 441 to 445 is G2; that stretch reads GITQH. Residues 463-466 are G3; it reads DTPG. GTP is bound by residues 463–467 and 517–520; these read DTPGH and NKMD. Residues 517 to 520 are G4; the sequence is NKMD. A G5 region spans residues 553 to 555; the sequence is SAI.

The protein belongs to the TRAFAC class translation factor GTPase superfamily. Classic translation factor GTPase family. IF-2 subfamily.

It localises to the cytoplasm. In terms of biological role, one of the essential components for the initiation of protein synthesis. Protects formylmethionyl-tRNA from spontaneous hydrolysis and promotes its binding to the 30S ribosomal subunits. Also involved in the hydrolysis of GTP during the formation of the 70S ribosomal complex. The chain is Translation initiation factor IF-2 from Amoebophilus asiaticus (strain 5a2).